A 66-amino-acid polypeptide reads, in one-letter code: Large ribosomal subunit protein uL29 (66 aa).

It belongs to the universal ribosomal protein uL29 family. As to quaternary structure, part of the 50S ribosomal subunit.

The chain is Large ribosomal subunit protein uL29 from Thermococcus kodakarensis (strain ATCC BAA-918 / JCM 12380 / KOD1) (Pyrococcus kodakaraensis (strain KOD1)).